The sequence spans 239 residues: MATKSNEENIAEFKGHNEIQIELMKEECIVVDNDDKPIRPGSKKETHLMVNINNGLLHRAFSIFLFNGEGKLLLQQRALEKITFPGYWTNTVCSHPLWIVGSELVEENAQGVKIAAKRKLNHELGVPLDQVNIDDFTFMTKIHYKSESKEDPQWGEHEIDHILIMQKDGITINAEPNEVMDYKYVSQEELDQLFKDEDEGKVKVTPWFRLIALNHLKPWWNNLNNLKPLVEPTNTIHRY.

K43 is a binding site for substrate. Residues H47 and H58 each contribute to the Mg(2+) site. The Nudix hydrolase domain maps to 56–210 (LLHRAFSIFL…KVKVTPWFRL (155 aa)). Positions 77 and 81 each coordinate substrate. The active site involves C93. Residue S94 participates in substrate binding. 2 residues coordinate Mg(2+): E156 and E158. E158 is an active-site residue.

The protein belongs to the IPP isomerase type 1 family. The cofactor is Mg(2+).

It catalyses the reaction isopentenyl diphosphate = dimethylallyl diphosphate. Its pathway is isoprenoid biosynthesis; dimethylallyl diphosphate biosynthesis; dimethylallyl diphosphate from isopentenyl diphosphate: step 1/1. Catalyzes the 1,3-allylic rearrangement of the homoallylic substrate isopentenyl (IPP) to its highly electrophilic allylic isomer, dimethylallyl diphosphate (DMAPP). The protein is Isopentenyl-diphosphate Delta-isomerase (ipi) of Dictyostelium discoideum (Social amoeba).